The sequence spans 130 residues: Small ribosomal subunit protein uS9 (130 aa).

It belongs to the universal ribosomal protein uS9 family.

The sequence is that of Small ribosomal subunit protein uS9 from Streptococcus equi subsp. equi (strain 4047).